The sequence spans 376 residues: N-acetyldiaminopimelate deacetylase (376 aa).

Asp69 is an active-site residue. Glu127 serves as the catalytic Proton acceptor.

Belongs to the peptidase M20A family. N-acetyldiaminopimelate deacetylase subfamily.

The enzyme catalyses N-acetyl-(2S,6S)-2,6-diaminopimelate + H2O = (2S,6S)-2,6-diaminopimelate + acetate. It functions in the pathway amino-acid biosynthesis; L-lysine biosynthesis via DAP pathway; LL-2,6-diaminopimelate from (S)-tetrahydrodipicolinate (acetylase route): step 3/3. Functionally, catalyzes the conversion of N-acetyl-diaminopimelate to diaminopimelate and acetate. This chain is N-acetyldiaminopimelate deacetylase, found in Lactococcus lactis subsp. cremoris (strain SK11).